The chain runs to 431 residues: Serine/threonine-protein kinase SSN3 (431 aa).

One can recognise a Protein kinase domain in the interval Y27–F355. ATP-binding positions include I33–V41 and K59. Catalysis depends on D174, which acts as the Proton acceptor. The tract at residues R397–R431 is disordered. A compositionally biased stretch (low complexity) spans N407–N424.

Belongs to the protein kinase superfamily. CMGC Ser/Thr protein kinase family. CDC2/CDKX subfamily. Component of the srb8-11 complex, a regulatory module of the Mediator complex. Mg(2+) is required as a cofactor.

The protein resides in the nucleus. It carries out the reaction L-seryl-[protein] + ATP = O-phospho-L-seryl-[protein] + ADP + H(+). The catalysed reaction is L-threonyl-[protein] + ATP = O-phospho-L-threonyl-[protein] + ADP + H(+). It catalyses the reaction [DNA-directed RNA polymerase] + ATP = phospho-[DNA-directed RNA polymerase] + ADP + H(+). In terms of biological role, component of the srb8-11 complex. The srb8-11 complex is a regulatory module of the Mediator complex which is itself dependent transcription. The srb8-11 complex may be involved in the transcriptional repression of a subset of genes regulated by Mediator. It may inhibit the association of the Mediator complex with RNA polymerase II to form the holoenzyme complex. The srb8-11 complex phosphorylates the C-terminal domain (CTD) of the largest subunit of RNA polymerase II. The polypeptide is Serine/threonine-protein kinase SSN3 (SSN3) (Scheffersomyces stipitis (strain ATCC 58785 / CBS 6054 / NBRC 10063 / NRRL Y-11545) (Yeast)).